We begin with the raw amino-acid sequence, 338 residues long: D-erythrose-4-phosphate dehydrogenase (338 aa).

Arginine 12 to isoleucine 13 provides a ligand contact to NAD(+). Substrate contacts are provided by residues serine 154–threonine 156, arginine 200, threonine 213–lysine 214, and arginine 236. The active-site Nucleophile is cysteine 155. Asparagine 318 provides a ligand contact to NAD(+).

The protein belongs to the glyceraldehyde-3-phosphate dehydrogenase family. Epd subfamily. As to quaternary structure, homotetramer.

The protein localises to the cytoplasm. It catalyses the reaction D-erythrose 4-phosphate + NAD(+) + H2O = 4-phospho-D-erythronate + NADH + 2 H(+). It participates in cofactor biosynthesis; pyridoxine 5'-phosphate biosynthesis; pyridoxine 5'-phosphate from D-erythrose 4-phosphate: step 1/5. Functionally, catalyzes the NAD-dependent conversion of D-erythrose 4-phosphate to 4-phosphoerythronate. In Yersinia pestis bv. Antiqua (strain Antiqua), this protein is D-erythrose-4-phosphate dehydrogenase.